Consider the following 648-residue polypeptide: Transcription termination factor FttA (648 aa).

Residues 1 to 179 (MIKRETQVDQ…QVGRNIYRKP (179 aa)) are not required for dimerization, required for cleavage at some sites. The KHa stretch occupies residues 9–76 (DQILKDIRGI…ISIRPDPDVL (68 aa)). The KHb stretch occupies residues 77-144 (LPPEEAEKLI…WAPKVVRTPP (68 aa)). A metallo-beta-lactamase N-terminus region spans residues 185–395 (WIRITGLGGF…LVMESTYGGA (211 aa)). Positions 253, 255, 257, 258, 341, and 364 each coordinate Zn(2+). Residues 396-589 (NDIQMPREEA…MEVHTIDGFS (194 aa)) form a beta-Casp region. The metallo-beta-lactamase C-terminus stretch occupies residues 590–648 (GHADRRELMNYVAKVRPRPERVITVHGEPQKCLDLATSIHRKFGLSTRAPNNLDTIRLR). Zn(2+) is bound at residue H615.

It belongs to the metallo-beta-lactamase superfamily. RNA-metabolizing metallo-beta-lactamase-like family. FttA subfamily. In terms of assembly, homodimer. Interacts with RNA polymerase (RNAP), interacts with the Spt4-Spt5 complex. It depends on Zn(2+) as a cofactor.

With respect to regulation, endoRNase activity is inhibited by 1,10-phenanthroline. Its function is as follows. Terminates transcription on the whole genome. Termination is linked to FttA-mediated RNA cleavage and does not require NTP hydrolysis. Cleaves endonucleolytically at the RNA exit channel of RNA polymerase (RNAP); the 5'-3' exonuclease activity of this protein degrades the nascent RNA released from RNAP. Functionally, a single-stranded endoribonuclease (endoRNase) with a preference for cleavage at CA dinucleotides. Has 5'-3' exoribonuclease (exoRNase) activity on 5'-monophosphorylated RNA; this activity does not occur on 5'-tri-phosphorylated or 5'-OH substrates. Also has weak activity 5'-3' exodeoxyribonuclease activity on ssDNA. This is Transcription termination factor FttA from Pyrococcus abyssi (strain GE5 / Orsay).